Consider the following 74-residue polypeptide: uncharacterized protein (74 aa).

This is an uncharacterized protein from Homo sapiens (Human).